The primary structure comprises 124 residues: CRISPR-associated endoribonuclease Cas2 4 (124 aa).

Asp40 serves as a coordination point for Mg(2+).

It belongs to the CRISPR-associated endoribonuclease Cas2 protein family. Homodimer, forms a heterotetramer with a Cas1 homodimer. Mg(2+) is required as a cofactor.

In terms of biological role, CRISPR (clustered regularly interspaced short palindromic repeat), is an adaptive immune system that provides protection against mobile genetic elements (viruses, transposable elements and conjugative plasmids). CRISPR clusters contain sequences complementary to antecedent mobile elements and target invading nucleic acids. CRISPR clusters are transcribed and processed into CRISPR RNA (crRNA). Functions as a ssRNA-specific endoribonuclease. Involved in the integration of spacer DNA into the CRISPR cassette. The chain is CRISPR-associated endoribonuclease Cas2 4 from Rhodospirillum rubrum (strain ATCC 11170 / ATH 1.1.1 / DSM 467 / LMG 4362 / NCIMB 8255 / S1).